The primary structure comprises 167 residues: RNA pyrophosphohydrolase (167 aa).

The Nudix hydrolase domain maps to 8 to 158 (PYRTCVGMML…KRPVYERVVK (151 aa)). Positions 47 to 68 (GGVDPGEDTWEAAKRELYEETN) match the Nudix box motif.

Belongs to the Nudix hydrolase family. RppH subfamily. A divalent metal cation is required as a cofactor.

Functionally, accelerates the degradation of transcripts by removing pyrophosphate from the 5'-end of triphosphorylated RNA, leading to a more labile monophosphorylated state that can stimulate subsequent ribonuclease cleavage. In Rhodopseudomonas palustris (strain HaA2), this protein is RNA pyrophosphohydrolase.